We begin with the raw amino-acid sequence, 468 residues long: Chromosomal replication initiator protein DnaA (468 aa).

The segment at 1 to 84 (MSSSLWLQCM…RFEVGSRPVA (84 aa)) is domain I, interacts with DnaA modulators. The segment at 81-113 (RPVAAPKPAPTRTPADVAAESSAPAQLQARKPV) is disordered. A domain II region spans residues 84 to 131 (AAPKPAPTRTPADVAAESSAPAQLQARKPVHKTWDDDAQAIADINHRS). The segment at 132–348 (NVNPKHKFNN…GALNRVIANA (217 aa)) is domain III, AAA+ region. Residues G176, G178, K179, and T180 each contribute to the ATP site. The domain IV, binds dsDNA stretch occupies residues 349–468 (NFTGRPITID…YSNLIRTLSS (120 aa)).

This sequence belongs to the DnaA family. Oligomerizes as a right-handed, spiral filament on DNA at oriC.

It localises to the cytoplasm. Its function is as follows. Plays an essential role in the initiation and regulation of chromosomal replication. ATP-DnaA binds to the origin of replication (oriC) to initiate formation of the DNA replication initiation complex once per cell cycle. Binds the DnaA box (a 9 base pair repeat at the origin) and separates the double-stranded (ds)DNA. Forms a right-handed helical filament on oriC DNA; dsDNA binds to the exterior of the filament while single-stranded (ss)DNA is stabiized in the filament's interior. The ATP-DnaA-oriC complex binds and stabilizes one strand of the AT-rich DNA unwinding element (DUE), permitting loading of DNA polymerase. After initiation quickly degrades to an ADP-DnaA complex that is not apt for DNA replication. Binds acidic phospholipids. The polypeptide is Chromosomal replication initiator protein DnaA (Vibrio vulnificus (strain CMCP6)).